We begin with the raw amino-acid sequence, 490 residues long: Endoglucanase 13 (490 aa).

An N-terminal signal peptide occupies residues Met1–Ala26. Asn6 is a glycosylation site (N-linked (GlcNAc...) asparagine). Asp86 acts as the Nucleophile in catalysis. Residues His412, Asp464, and Glu473 contribute to the active site.

It belongs to the glycosyl hydrolase 9 (cellulase E) family.

The protein localises to the secreted. The catalysed reaction is Endohydrolysis of (1-&gt;4)-beta-D-glucosidic linkages in cellulose, lichenin and cereal beta-D-glucans.. The sequence is that of Endoglucanase 13 from Arabidopsis thaliana (Mouse-ear cress).